A 302-amino-acid chain; its full sequence is tRNA dimethylallyltransferase (302 aa).

9 to 16 (GATATGKS) is an ATP binding site. 11-16 (TATGKS) contributes to the substrate binding site. The segment at 34-37 (DSRQ) is interaction with substrate tRNA.

This sequence belongs to the IPP transferase family. Monomer. It depends on Mg(2+) as a cofactor.

The catalysed reaction is adenosine(37) in tRNA + dimethylallyl diphosphate = N(6)-dimethylallyladenosine(37) in tRNA + diphosphate. Catalyzes the transfer of a dimethylallyl group onto the adenine at position 37 in tRNAs that read codons beginning with uridine, leading to the formation of N6-(dimethylallyl)adenosine (i(6)A). This chain is tRNA dimethylallyltransferase, found in Nostoc punctiforme (strain ATCC 29133 / PCC 73102).